Consider the following 587-residue polypeptide: Leucine-rich repeat-containing protein 63 (587 aa).

LRR repeat units lie at residues Gln251–Arg274, Ala344–Leu367, Lys368–Leu390, Phe392–Leu413, Ser414–Leu436, Arg437–Leu459, and Leu487–Glu510.

The sequence is that of Leucine-rich repeat-containing protein 63 (LRRC63) from Homo sapiens (Human).